The chain runs to 341 residues: Large ribosomal subunit protein uL29m (341 aa).

Positions 44-74 (LARTRYTKPKPKPPRRSKVRAPTQTTHHDTD) are disordered. Basic residues predominate over residues 48–62 (RYTKPKPKPPRRSKV).

The protein belongs to the universal ribosomal protein uL29 family. Component of the mitochondrial large ribosomal subunit. Mature mitochondrial ribosomes consist of a small (37S) and a large (54S) subunit. The 37S subunit contains at least 33 different proteins and 1 molecule of RNA (15S). The 54S subunit contains at least 45 different proteins and 1 molecule of RNA (21S).

The protein localises to the mitochondrion. The polypeptide is Large ribosomal subunit protein uL29m (MRPL4) (Eremothecium gossypii (strain ATCC 10895 / CBS 109.51 / FGSC 9923 / NRRL Y-1056) (Yeast)).